The sequence spans 416 residues: Thyroid hormone receptor alpha (416 aa).

Polar residues predominate over residues 1-13 (MEPMSNKQDSNSS). Positions 1–37 (MEPMSNKQDSNSSEGDEKGWPDVPKRKRKNSQCSMKS) are disordered. The tract at residues 1–58 (MEPMSNKQDSNSSEGDEKGWPDVPKRKRKNSQCSMKSMSALSVSVPGYIPSYLEKDEP) is modulating. A compositionally biased stretch (basic and acidic residues) spans 15-24 (GDEKGWPDVP). Zn(2+)-binding residues include cysteine 59, cysteine 62, cysteine 76, cysteine 79, cysteine 97, cysteine 103, cysteine 113, and cysteine 116. 2 NR C4-type zinc fingers span residues 59 to 79 (CVVC…CEGC) and 97 to 121 (CKYE…FKKC). Positions 59 to 133 (CVVCGDKATG…VGMAMDLVLD (75 aa)) form a DNA-binding region, nuclear receptor. One can recognise an NR LBD domain in the interval 169 to 413 (AEWELIRMAT…PPLFLEVFED (245 aa)). A 3,3',5-triiodo-L-thyronine-binding site is contributed by arginine 234.

The protein belongs to the nuclear hormone receptor family. NR1 subfamily.

It is found in the nucleus. Its function is as follows. Nuclear hormone receptor that can act as a repressor or activator of transcription. High affinity receptor for thyroid hormones, including triiodothyronine and thyroxine. This chain is Thyroid hormone receptor alpha (thra), found in Hippoglossus hippoglossus (Atlantic halibut).